An 81-amino-acid chain; its full sequence is Acyl carrier protein (81 aa).

One can recognise a Carrier domain in the interval 5-80 (EEIFSKVKSI…DIVSYIEKKL (76 aa)). The residue at position 40 (Ser-40) is an O-(pantetheine 4'-phosphoryl)serine.

Belongs to the acyl carrier protein (ACP) family. In terms of processing, 4'-phosphopantetheine is transferred from CoA to a specific serine of apo-ACP by AcpS. This modification is essential for activity because fatty acids are bound in thioester linkage to the sulfhydryl of the prosthetic group.

It localises to the cytoplasm. Its pathway is lipid metabolism; fatty acid biosynthesis. Its function is as follows. Carrier of the growing fatty acid chain in fatty acid biosynthesis. This chain is Acyl carrier protein, found in Thermotoga maritima (strain ATCC 43589 / DSM 3109 / JCM 10099 / NBRC 100826 / MSB8).